The sequence spans 38 residues: Very early lactation protein (38 aa).

As to quaternary structure, homodimer. In terms of processing, O-glycosylated. Contains sialic acid residues. In terms of tissue distribution, found in the whey fraction of milk (at protein level).

It is found in the secreted. The chain is Very early lactation protein from Trichosurus vulpecula (Brush-tailed possum).